Reading from the N-terminus, the 239-residue chain is DNA repair protein RecO (239 aa).

This sequence belongs to the RecO family.

In terms of biological role, involved in DNA repair and RecF pathway recombination. This is DNA repair protein RecO from Glaesserella parasuis serovar 5 (strain SH0165) (Haemophilus parasuis).